Here is an 82-residue protein sequence, read N- to C-terminus: Photosystem I iron-sulfur center (82 aa).

4Fe-4S ferredoxin-type domains lie at 2-31 (AHSV…MVPW) and 40-69 (IAAA…IRVY). Residues Cys11, Cys14, Cys17, Cys21, Cys49, Cys52, Cys55, and Cys59 each coordinate [4Fe-4S] cluster.

The cyanobacterial PSI reaction center is composed of one copy each of PsaA,B,C,D,E,F,I,J,K,L,M and X, and forms trimeric complexes. The cofactor is [4Fe-4S] cluster.

The protein localises to the cellular thylakoid membrane. The enzyme catalyses reduced [plastocyanin] + hnu + oxidized [2Fe-2S]-[ferredoxin] = oxidized [plastocyanin] + reduced [2Fe-2S]-[ferredoxin]. Functionally, apoprotein for the two 4Fe-4S centers FA and FB of photosystem I (PSI); essential for photochemical activity. FB is the terminal electron acceptor of PSI, donating electrons to ferredoxin. The C-terminus interacts with PsaA/B/D and helps assemble the protein into the PSI complex. Required for binding of PsaD and PsaE to PSI. PSI is a plastocyanin/cytochrome c6-ferredoxin oxidoreductase, converting photonic excitation into a charge separation, which transfers an electron from the donor P700 chlorophyll pair to the spectroscopically characterized acceptors A0, A1, FX, FA and FB in turn. The sequence is that of Photosystem I iron-sulfur center from Synechococcus sp. (strain JA-2-3B'a(2-13)) (Cyanobacteria bacterium Yellowstone B-Prime).